The chain runs to 92 residues: Small ribosomal subunit protein uS19 (92 aa).

Belongs to the universal ribosomal protein uS19 family.

Functionally, protein S19 forms a complex with S13 that binds strongly to the 16S ribosomal RNA. This Allorhizobium ampelinum (strain ATCC BAA-846 / DSM 112012 / S4) (Agrobacterium vitis (strain S4)) protein is Small ribosomal subunit protein uS19.